Here is a 140-residue protein sequence, read N- to C-terminus: Small ribosomal subunit protein uS12 (140 aa).

The tract at residues 1–28 is disordered; it reads MPTINQLVRKSRKALEKKSTAPALQKGY. Asp102 is modified (3-methylthioaspartic acid). Positions 119–140 are disordered; the sequence is GVDKRRQSRSKYGAKRPKEAKK. Residues 124 to 140 are compositionally biased toward basic residues; that stretch reads RQSRSKYGAKRPKEAKK.

It belongs to the universal ribosomal protein uS12 family. Part of the 30S ribosomal subunit. Contacts proteins S8 and S17. May interact with IF1 in the 30S initiation complex.

In terms of biological role, with S4 and S5 plays an important role in translational accuracy. Interacts with and stabilizes bases of the 16S rRNA that are involved in tRNA selection in the A site and with the mRNA backbone. Located at the interface of the 30S and 50S subunits, it traverses the body of the 30S subunit contacting proteins on the other side and probably holding the rRNA structure together. The combined cluster of proteins S8, S12 and S17 appears to hold together the shoulder and platform of the 30S subunit. The sequence is that of Small ribosomal subunit protein uS12 from Clostridioides difficile (strain 630) (Peptoclostridium difficile).